A 314-amino-acid polypeptide reads, in one-letter code: 4-hydroxy-3-methylbut-2-enyl diphosphate reductase (314 aa).

Residue Cys-12 participates in [4Fe-4S] cluster binding. 2 residues coordinate (2E)-4-hydroxy-3-methylbut-2-enyl diphosphate: His-41 and His-74. His-41 and His-74 together coordinate dimethylallyl diphosphate. Isopentenyl diphosphate contacts are provided by His-41 and His-74. Cys-96 serves as a coordination point for [4Fe-4S] cluster. (2E)-4-hydroxy-3-methylbut-2-enyl diphosphate is bound at residue His-124. Position 124 (His-124) interacts with dimethylallyl diphosphate. Residue His-124 coordinates isopentenyl diphosphate. Catalysis depends on Glu-126, which acts as the Proton donor. (2E)-4-hydroxy-3-methylbut-2-enyl diphosphate is bound at residue Thr-167. Cys-197 provides a ligand contact to [4Fe-4S] cluster. (2E)-4-hydroxy-3-methylbut-2-enyl diphosphate is bound by residues Ser-225, Ser-226, Asn-227, and Ser-269. Dimethylallyl diphosphate contacts are provided by Ser-225, Ser-226, Asn-227, and Ser-269. Positions 225, 226, 227, and 269 each coordinate isopentenyl diphosphate.

The protein belongs to the IspH family. [4Fe-4S] cluster is required as a cofactor.

The enzyme catalyses isopentenyl diphosphate + 2 oxidized [2Fe-2S]-[ferredoxin] + H2O = (2E)-4-hydroxy-3-methylbut-2-enyl diphosphate + 2 reduced [2Fe-2S]-[ferredoxin] + 2 H(+). The catalysed reaction is dimethylallyl diphosphate + 2 oxidized [2Fe-2S]-[ferredoxin] + H2O = (2E)-4-hydroxy-3-methylbut-2-enyl diphosphate + 2 reduced [2Fe-2S]-[ferredoxin] + 2 H(+). It functions in the pathway isoprenoid biosynthesis; dimethylallyl diphosphate biosynthesis; dimethylallyl diphosphate from (2E)-4-hydroxy-3-methylbutenyl diphosphate: step 1/1. The protein operates within isoprenoid biosynthesis; isopentenyl diphosphate biosynthesis via DXP pathway; isopentenyl diphosphate from 1-deoxy-D-xylulose 5-phosphate: step 6/6. Catalyzes the conversion of 1-hydroxy-2-methyl-2-(E)-butenyl 4-diphosphate (HMBPP) into a mixture of isopentenyl diphosphate (IPP) and dimethylallyl diphosphate (DMAPP). Acts in the terminal step of the DOXP/MEP pathway for isoprenoid precursor biosynthesis. This Actinobacillus pleuropneumoniae serotype 5b (strain L20) protein is 4-hydroxy-3-methylbut-2-enyl diphosphate reductase.